A 522-amino-acid chain; its full sequence is Putative E3 ubiquitin-protein ligase RING1a (522 aa).

Over residues 1 to 10 (MSVKNNSFSS) the composition is skewed to polar residues. The disordered stretch occupies residues 1 to 119 (MSVKNNSFSS…RSPSSISGDQ (119 aa)). Positions 32 to 64 (LQEKDETKEEKEGDEEVKHDEAEEDQEVVKPND) are enriched in basic and acidic residues. The span at 65–106 (AEEDDDGDDAEEDEEEEVEAEEDEEAEEEEEEEEEEEEEEED) shows a compositional bias: acidic residues. Residues 136 to 176 (CPICLGIIKKTRTVMECLHRFCRECIDKSMRLGNNECPACR) form an RING-type zinc finger. Disordered stretches follow at residues 250–347 (VLMR…DTKG) and 363–385 (RGGT…KSVR). Over residues 287 to 306 (NNNRGRDKDSSSDERGTEVR) the composition is skewed to basic and acidic residues. Positions 316–325 (SRSTQHPSSS) are enriched in low complexity. 2 stretches are compositionally biased toward polar residues: residues 326 to 336 (GANKNNGNCAD) and 366 to 384 (TRSN…SKSV).

Homodimer or heterodimer with RING1B. Interacts with CLF. Component of the PRC1-like complex, at least composed of RING1A, RING1B and LHP1.

It is found in the nucleus. It carries out the reaction S-ubiquitinyl-[E2 ubiquitin-conjugating enzyme]-L-cysteine + [acceptor protein]-L-lysine = [E2 ubiquitin-conjugating enzyme]-L-cysteine + N(6)-ubiquitinyl-[acceptor protein]-L-lysine.. The protein operates within protein modification; protein ubiquitination. In terms of biological role, putative E3 ubiquitin-protein ligase that mediates monoubiquitination of 'Lys-119' of histone H2A (H2AK119ub), thereby playing a central role in histone code and gene regulation. Functionally, as part of the PRC1-like complex, repress class I KNOX gene expression. PcG PRC1 complex maintains the transcriptionally repressive state of many genes, including Hox genes, throughout development. PcG PRC1 complex acts via chromatin remodeling and modification of histones, rendering chromatin heritably changed in its expressibility. The polypeptide is Putative E3 ubiquitin-protein ligase RING1a (RING1A) (Arabidopsis thaliana (Mouse-ear cress)).